The following is a 585-amino-acid chain: Probable phosphoglucomutase, cytoplasmic 2 (585 aa).

The segment at 1-20 (MVSFKVSLVSTSPIDGQKPG) is disordered. Residues arginine 25 and serine 124 each contribute to the alpha-D-glucose 1,6-bisphosphate site. The active-site Phosphoserine intermediate is serine 124. Mg(2+)-binding residues include serine 124, aspartate 301, aspartate 303, and aspartate 305. A Phosphoserine modification is found at serine 124. Alpha-D-glucose 1,6-bisphosphate is bound by residues aspartate 305, arginine 306, threonine 369, glutamate 388, serine 390, and lysine 401.

It belongs to the phosphohexose mutase family. In terms of assembly, monomer. Mg(2+) serves as cofactor.

It localises to the cytoplasm. The enzyme catalyses alpha-D-glucose 1-phosphate = alpha-D-glucose 6-phosphate. The catalysed reaction is O-phospho-L-seryl-[protein] + alpha-D-glucose 1-phosphate = alpha-D-glucose 1,6-bisphosphate + L-seryl-[protein]. It carries out the reaction alpha-D-glucose 1,6-bisphosphate + L-seryl-[protein] = O-phospho-L-seryl-[protein] + alpha-D-glucose 6-phosphate. Catalyzes the reversible isomerization of alpha-D-glucose 1-phosphate to alpha-D-glucose 6-phosphate. The mechanism proceeds via the intermediate compound alpha-D-glucose 1,6-bisphosphate. This enzyme participates in both the breakdown and synthesis of glucose. In Arabidopsis thaliana (Mouse-ear cress), this protein is Probable phosphoglucomutase, cytoplasmic 2.